The sequence spans 142 residues: Large ribosomal subunit protein uL13 (142 aa).

This sequence belongs to the universal ribosomal protein uL13 family. Part of the 50S ribosomal subunit.

Its function is as follows. This protein is one of the early assembly proteins of the 50S ribosomal subunit, although it is not seen to bind rRNA by itself. It is important during the early stages of 50S assembly. The protein is Large ribosomal subunit protein uL13 of Lachnospira eligens (strain ATCC 27750 / DSM 3376 / VPI C15-48 / C15-B4) (Eubacterium eligens).